The chain runs to 170 residues: 3-dehydroquinate dehydratase (170 aa).

Tyr22 serves as the catalytic Proton acceptor. Residues Asn76, His82, and Asp89 each contribute to the substrate site. Residue His102 is the Proton donor of the active site. Residues 103-104 (LT) and Arg113 contribute to the substrate site.

It belongs to the type-II 3-dehydroquinase family. As to quaternary structure, homododecamer.

The catalysed reaction is 3-dehydroquinate = 3-dehydroshikimate + H2O. It participates in metabolic intermediate biosynthesis; chorismate biosynthesis; chorismate from D-erythrose 4-phosphate and phosphoenolpyruvate: step 3/7. Its function is as follows. Catalyzes a trans-dehydration via an enolate intermediate. This Helicobacter pylori (strain J99 / ATCC 700824) (Campylobacter pylori J99) protein is 3-dehydroquinate dehydratase (aroQ).